The following is a 371-amino-acid chain: Tetraacyldisaccharide 4'-kinase (371 aa).

63-70 (AVGGAGKT) contributes to the ATP binding site.

This sequence belongs to the LpxK family.

It carries out the reaction a lipid A disaccharide + ATP = a lipid IVA + ADP + H(+). Its pathway is glycolipid biosynthesis; lipid IV(A) biosynthesis; lipid IV(A) from (3R)-3-hydroxytetradecanoyl-[acyl-carrier-protein] and UDP-N-acetyl-alpha-D-glucosamine: step 6/6. In terms of biological role, transfers the gamma-phosphate of ATP to the 4'-position of a tetraacyldisaccharide 1-phosphate intermediate (termed DS-1-P) to form tetraacyldisaccharide 1,4'-bis-phosphate (lipid IVA). This is Tetraacyldisaccharide 4'-kinase from Anaeromyxobacter sp. (strain Fw109-5).